Consider the following 171-residue polypeptide: UPF0398 protein MGAS10270_Spy1470 (171 aa).

The protein belongs to the UPF0398 family.

This Streptococcus pyogenes serotype M2 (strain MGAS10270) protein is UPF0398 protein MGAS10270_Spy1470.